A 366-amino-acid polypeptide reads, in one-letter code: Chaperone protein DnaJ (366 aa).

The 65-residue stretch at 5 to 69 folds into the J domain; sequence DYYEVLGVSK…QKRAQYDQFG (65 aa). The CR-type zinc-finger motif lies at 128 to 210; it reads GKELNVEIPV…CHGTGKVRKR (83 aa). Residues Cys141, Cys144, Cys158, Cys161, Cys184, Cys187, Cys198, and Cys201 each coordinate Zn(2+). 4 CXXCXGXG motif repeats span residues 141–148, 158–165, 184–191, and 198–205; these read CDTCHGSG, CKYCSGTG, CRHCSGTG, and CTTCHGTG.

This sequence belongs to the DnaJ family. In terms of assembly, homodimer. It depends on Zn(2+) as a cofactor.

It is found in the cytoplasm. Its function is as follows. Participates actively in the response to hyperosmotic and heat shock by preventing the aggregation of stress-denatured proteins and by disaggregating proteins, also in an autonomous, DnaK-independent fashion. Unfolded proteins bind initially to DnaJ; upon interaction with the DnaJ-bound protein, DnaK hydrolyzes its bound ATP, resulting in the formation of a stable complex. GrpE releases ADP from DnaK; ATP binding to DnaK triggers the release of the substrate protein, thus completing the reaction cycle. Several rounds of ATP-dependent interactions between DnaJ, DnaK and GrpE are required for fully efficient folding. Also involved, together with DnaK and GrpE, in the DNA replication of plasmids through activation of initiation proteins. The protein is Chaperone protein DnaJ of Bacillus cytotoxicus (strain DSM 22905 / CIP 110041 / 391-98 / NVH 391-98).